The primary structure comprises 1194 residues: Immunoglobulin superfamily member 3 (1194 aa).

The N-terminal stretch at 1-19 is a signal peptide; sequence MKCFFPVLSCLAVLGVVSA. 8 consecutive Ig-like C2-type domains span residues 20 to 138, 143 to 262, 276 to 386, 401 to 539, 545 to 661, 676 to 803, 813 to 945, and 949 to 1097; these read QRQV…AKMN, PDSL…WYAM, PTDK…KTVT, PIVV…VSIT, FAVT…WTRL, PVTK…EEVS, PDSR…TAVT, and PDAA…YRLT. Residues 20 to 1124 are Extracellular-facing; sequence QRQVTVQEGP…LQSLICSNDA (1105 aa). 2 disulfides stabilise this stretch: Cys42–Cys120 and Cys167–Cys246. Residue Asn43 is glycosylated (N-linked (GlcNAc...) asparagine). Residues 250 to 252 carry the EWI motif motif; that stretch reads EWI. A disulfide bridge connects residues Cys302 and Cys376. The N-linked (GlcNAc...) asparagine glycan is linked to Asn418. 5 cysteine pairs are disulfide-bonded: Cys432/Cys511, Cys566/Cys645, Cys701/Cys782, Cys838/Cys918, and Cys974/Cys1080. An N-linked (GlcNAc...) asparagine glycan is attached at Asn842. A disordered region spans residues 997-1030; it reads GGGKRGSLGIDEQEEEEEEEDISQEEDSEDPTER. Residues 1007-1026 show a composition bias toward acidic residues; that stretch reads DEQEEEEEEEDISQEEDSED. Asn1077 carries N-linked (GlcNAc...) asparagine glycosylation. Residues 1125-1145 traverse the membrane as a helical segment; the sequence is LFYFVFFYPFPIFGILIITIL. At 1146–1194 the chain is on the cytoplasmic side; the sequence is LVRFKSRNSSKNSEGKNGVPLLWIKEPHLNYSPTCLEPPVLSIHPGAID.

In terms of tissue distribution, expressed in the lacrimal duct and lacrimal gland.

The protein localises to the membrane. This is Immunoglobulin superfamily member 3 (Igsf3) from Mus musculus (Mouse).